The chain runs to 118 residues: NADH-quinone oxidoreductase subunit A 2 (118 aa).

3 helical membrane-spanning segments follow: residues 5-25 (YLPILVLVVIAVLFGLGSVIF), 62-82 (LIAMLFILFDIEAVFLYPWAV), and 87-107 (LGMFGLIEMGVFIVILFVGYV).

This sequence belongs to the complex I subunit 3 family. NDH-1 is composed of 14 different subunits. Subunits NuoA, H, J, K, L, M, N constitute the membrane sector of the complex.

The protein resides in the cell inner membrane. The catalysed reaction is a quinone + NADH + 5 H(+)(in) = a quinol + NAD(+) + 4 H(+)(out). In terms of biological role, NDH-1 shuttles electrons from NADH, via FMN and iron-sulfur (Fe-S) centers, to quinones in the respiratory chain. The immediate electron acceptor for the enzyme in this species is believed to be ubiquinone. Couples the redox reaction to proton translocation (for every two electrons transferred, four hydrogen ions are translocated across the cytoplasmic membrane), and thus conserves the redox energy in a proton gradient. The polypeptide is NADH-quinone oxidoreductase subunit A 2 (Citrifermentans bemidjiense (strain ATCC BAA-1014 / DSM 16622 / JCM 12645 / Bem) (Geobacter bemidjiensis)).